Here is a 75-residue protein sequence, read N- to C-terminus: Theromacin (75 aa).

5 disulfides stabilise this stretch: Cys2/Cys9, Cys24/Cys28, Cys31/Cys73, Cys39/Cys47, and Cys57/Cys59.

This sequence belongs to the macin family.

It localises to the secreted. Functionally, has a bactericial activity. This is Theromacin from Hirudo medicinalis (Medicinal leech).